The following is a 467-amino-acid chain: A-type ATP synthase subunit B (467 aa).

A disordered region spans residues Gly95–Val114.

It belongs to the ATPase alpha/beta chains family. Has multiple subunits with at least A(3), B(3), C, D, E, F, H, I and proteolipid K(x).

It is found in the cell membrane. Component of the A-type ATP synthase that produces ATP from ADP in the presence of a proton gradient across the membrane. The B chain is a regulatory subunit. The polypeptide is A-type ATP synthase subunit B (Pyrobaculum islandicum (strain DSM 4184 / JCM 9189 / GEO3)).